Consider the following 335-residue polypeptide: Trans-3-hydroxy-L-proline dehydratase (335 aa).

Cys-91 functions as the Proton acceptor in the catalytic mechanism. Substrate-binding positions include 92-93, His-222, and 256-257; these read GH and GS.

It belongs to the proline racemase family. In terms of assembly, homodimer.

It carries out the reaction trans-3-hydroxy-L-proline = 1-pyrroline-2-carboxylate + H2O. Its function is as follows. Catalyzes the dehydration of trans-3-hydroxy-L-proline (t3LHyp) to Delta(1)-pyrroline-2-carboxylate (Pyr2C). Does not possess neither proline racemase nor 4-hydroxyproline 2-epimerase activities. The protein is Trans-3-hydroxy-L-proline dehydratase of Burkholderia cenocepacia (strain HI2424).